The following is a 215-amino-acid chain: Probable glutathione S-transferase GSTF2 (215 aa).

The GST N-terminal domain maps to 2–83 (APMKLYGSTL…YVCRKNKPEL (82 aa)). Residues Ser-12, 41–42 (HK), 54–55 (QV), and 67–68 (ES) each bind glutathione. A GST C-terminal domain is found at 88–215 (DLKESAMVDV…KVASLMKPPA (128 aa)).

Belongs to the GST superfamily. Phi family. Constitutively expressed in roots. Expressed in anthers, callus, panicles, sheaths and stems (at protein level).

It catalyses the reaction RX + glutathione = an S-substituted glutathione + a halide anion + H(+). In terms of biological role, conjugation of reduced glutathione to a wide number of exogenous and endogenous hydrophobic electrophiles. In Oryza sativa subsp. japonica (Rice), this protein is Probable glutathione S-transferase GSTF2 (GSTF2).